Reading from the N-terminus, the 118-residue chain is Holo-[acyl-carrier-protein] synthase (118 aa).

The Mg(2+) site is built by Asp-5 and Glu-51.

Belongs to the P-Pant transferase superfamily. AcpS family. Mg(2+) is required as a cofactor.

The protein localises to the cytoplasm. The catalysed reaction is apo-[ACP] + CoA = holo-[ACP] + adenosine 3',5'-bisphosphate + H(+). Functionally, transfers the 4'-phosphopantetheine moiety from coenzyme A to a Ser of acyl-carrier-protein. The protein is Holo-[acyl-carrier-protein] synthase of Helicobacter pylori (strain P12).